A 366-amino-acid chain; its full sequence is GDSL esterase/lipase At1g74460 (366 aa).

A signal peptide spans 1–20 (MKFCAIFVLFIVLAINGYDC). Catalysis depends on Ser-30, which acts as the Nucleophile. Asn-113 and Asn-260 each carry an N-linked (GlcNAc...) asparagine glycan. Catalysis depends on residues Asp-320 and His-323.

The protein belongs to the 'GDSL' lipolytic enzyme family.

It localises to the secreted. This chain is GDSL esterase/lipase At1g74460, found in Arabidopsis thaliana (Mouse-ear cress).